We begin with the raw amino-acid sequence, 274 residues long: Putative pyruvate, phosphate dikinase regulatory protein (274 aa).

G153 to T160 serves as a coordination point for ADP.

Belongs to the pyruvate, phosphate/water dikinase regulatory protein family. PDRP subfamily.

The enzyme catalyses N(tele)-phospho-L-histidyl/L-threonyl-[pyruvate, phosphate dikinase] + ADP = N(tele)-phospho-L-histidyl/O-phospho-L-threonyl-[pyruvate, phosphate dikinase] + AMP + H(+). The catalysed reaction is N(tele)-phospho-L-histidyl/O-phospho-L-threonyl-[pyruvate, phosphate dikinase] + phosphate + H(+) = N(tele)-phospho-L-histidyl/L-threonyl-[pyruvate, phosphate dikinase] + diphosphate. Its function is as follows. Bifunctional serine/threonine kinase and phosphorylase involved in the regulation of the pyruvate, phosphate dikinase (PPDK) by catalyzing its phosphorylation/dephosphorylation. The chain is Putative pyruvate, phosphate dikinase regulatory protein from Bartonella tribocorum (strain CIP 105476 / IBS 506).